An 876-amino-acid polypeptide reads, in one-letter code: MVKEKKKADKKGDKSARSPSSISDNPEAAKQEISASKQEVAPSAVIPVLETPLKQTPKRDSEHTYQSEDETQYEEPILTKLIVESYEGEKVRGLYEGEGFAVFQGGNTYHGMFSEGLMHGQGTYIWADGLKYEGDFVKNIPMNHGVYTWPDGSTYEGEVVNGMRNGFGMFKCGTQPVSYIGHWCHGKRHGKGSIYYNQEGTSWYEGDWVYNIKKGWGIRCYKSGNIYEGQWENNMRHGEGRMRWLTTNEEYTGHWEKGIQNGFGTHTWFLKRIPNSQYPLRNEYIGAFVNGFRHGQGKFYYASGAMYEGEWVSNKKQGRGRITFKNGRVYEGLFSNDHIAQFFEAEMDYSYSLDRRSDISQRSRQARGSSVSADREPETLRKLDGSESRSVLGSSIELDLNLLLDMYPEESQEEEKKQVEYAVLRNITELRRIYCFYSGLGCDHSLDNTFLMTKLHFWRFLKDCRFHHHNITLADMDRVLSVYNGIPIEEIHSPFRTILLRTFLNYLLQLAYYIHHKEFQNRSPSLFLCFTKLMAENIHPHACQVKGHLFNEQQRTLYSMNYIDKCWEIYTAYCRPNEAPPYELTMKMRYFLWMLKDFRMINKELTATKFMRVIAEDNPFVYDGMDSNFELELVFLEFFEALLCFSLCCMFDQMTRSYLKAPYDDVTTNRYGSTQTVLNQSIHRSPSGATSHDSEVHFSSTKSSLDKIGVLPDGKIRQSEPKLKKSLSEDKVSKMNLKAQGRGLVFMSPHGEKYEKSKDEQKEKLNMWVNNLYVFFVSVLFSAYKHEEALKEKVEENRLQEAVLAQQKQIENEELEARLNILREEEARRQDFELDITVLKEPPEVPAVQPLTPSPPKEDLVSMQTSKASPGKKKKK.

Basic and acidic residues-rich tracts occupy residues 1-16 (MVKE…DKSA) and 57-66 (PKRDSEHTYQ). The disordered stretch occupies residues 1–72 (MVKEKKKADK…HTYQSEDETQ (72 aa)). MORN repeat units follow at residues 86–108 (YEGE…GGNT), 109–131 (YHGM…DGLK), 132–154 (YEGD…DGST), 155–177 (YEGE…TQPV), 179–201 (YIGH…QEGT), 204–226 (YEGD…SGNI), 227–249 (YEGQ…TTNE), 251–273 (YTGH…LKRI), 284–306 (YIGA…SGAM), and 307–329 (YEGE…NGRV). Disordered regions lie at residues 360-386 (SQRS…LDGS) and 841-876 (EPPE…KKKK). Residues 373 to 386 (ADREPETLRKLDGS) are compositionally biased toward basic and acidic residues. Residues 752–841 (EKYEKSKDEQ…FELDITVLKE (90 aa)) adopt a coiled-coil conformation.

Interacts with RSPH6A. Does not appear to be part of the axonemal radial spoke complexes 1 or 2.

Its subcellular location is the cytoplasm. It localises to the cytoskeleton. It is found in the cilium axoneme. The protein localises to the cell projection. The protein resides in the cilium. Its subcellular location is the flagellum. Functionally, may function as part of the axonemal radial spoke complex 3 (RS3). Radial spoke complexes are important for ciliary motility. This Rattus norvegicus (Rat) protein is Radial spoke head 10 homolog B (Rsph10b).